We begin with the raw amino-acid sequence, 219 residues long: tRNA (guanine-N(7)-)-methyltransferase (219 aa).

S-adenosyl-L-methionine contacts are provided by Glu43, Asp68, Glu101, and Asn124. Substrate contacts are provided by Lys128 and Asp160.

The protein belongs to the class I-like SAM-binding methyltransferase superfamily. TrmB family.

It carries out the reaction guanosine(46) in tRNA + S-adenosyl-L-methionine = N(7)-methylguanosine(46) in tRNA + S-adenosyl-L-homocysteine. The protein operates within tRNA modification; N(7)-methylguanine-tRNA biosynthesis. Functionally, catalyzes the formation of N(7)-methylguanine at position 46 (m7G46) in tRNA. This chain is tRNA (guanine-N(7)-)-methyltransferase, found in Clostridium botulinum (strain Alaska E43 / Type E3).